The primary structure comprises 337 residues: Biotin synthase (337 aa).

Positions 62–289 constitute a Radical SAM core domain; that stretch reads NAVQLSTLIS…KAMVRLSAGR (228 aa). 3 residues coordinate [4Fe-4S] cluster: Cys-77, Cys-81, and Cys-84. [2Fe-2S] cluster contacts are provided by Cys-121, Cys-152, Cys-212, and Arg-284.

The protein belongs to the radical SAM superfamily. Biotin synthase family. As to quaternary structure, homodimer. Requires [4Fe-4S] cluster as cofactor. It depends on [2Fe-2S] cluster as a cofactor.

It catalyses the reaction (4R,5S)-dethiobiotin + (sulfur carrier)-SH + 2 reduced [2Fe-2S]-[ferredoxin] + 2 S-adenosyl-L-methionine = (sulfur carrier)-H + biotin + 2 5'-deoxyadenosine + 2 L-methionine + 2 oxidized [2Fe-2S]-[ferredoxin]. Its pathway is cofactor biosynthesis; biotin biosynthesis; biotin from 7,8-diaminononanoate: step 2/2. In terms of biological role, catalyzes the conversion of dethiobiotin (DTB) to biotin by the insertion of a sulfur atom into dethiobiotin via a radical-based mechanism. This Nitrosomonas europaea (strain ATCC 19718 / CIP 103999 / KCTC 2705 / NBRC 14298) protein is Biotin synthase.